The primary structure comprises 1070 residues: DNA-directed RNA polymerase subunit beta (1070 aa).

This sequence belongs to the RNA polymerase beta chain family. In terms of assembly, in plastids the minimal PEP RNA polymerase catalytic core is composed of four subunits: alpha, beta, beta', and beta''. When a (nuclear-encoded) sigma factor is associated with the core the holoenzyme is formed, which can initiate transcription.

The protein resides in the plastid. It is found in the chloroplast. The enzyme catalyses RNA(n) + a ribonucleoside 5'-triphosphate = RNA(n+1) + diphosphate. In terms of biological role, DNA-dependent RNA polymerase catalyzes the transcription of DNA into RNA using the four ribonucleoside triphosphates as substrates. This Solanum lycopersicum (Tomato) protein is DNA-directed RNA polymerase subunit beta.